Reading from the N-terminus, the 147-residue chain is Fibromodulin (147 aa).

LRR repeat units follow at residues 1 to 15, 16 to 37, 40 to 61, 63 to 84, 85 to 105, and 108 to 128; these read LDHNNLTRMPGPLPR, SLRELHLDHNQISRVPNNALEG, NLTALYLQHNEIQEVGSSMRGL, SLILLDLSYNHLRKVPDGLPSA, LEQLYLEHNNVYSVPDSYFRG, and KLLYVRLSHNSLTNNGLASNT. N-linked (GlcNAc...) (keratan sulfate) asparagine glycosylation is present at Asn5. N-linked (GlcNAc...) (keratan sulfate) asparagine glycosylation is present at Asn40. Asn130 is a glycosylation site (N-linked (GlcNAc...) (keratan sulfate) asparagine). The LRR 7 repeat unit spans residues 133–147; sequence SLLELDLSYNQLQKI.

This sequence belongs to the small leucine-rich proteoglycan (SLRP) family. SLRP class II subfamily. Binds to type I and type II collagen. In terms of processing, binds keratan sulfate chains.

It is found in the secreted. Its subcellular location is the extracellular space. It localises to the extracellular matrix. Functionally, affects the rate of fibrils formation. May have a primary role in collagen fibrillogenesis. The sequence is that of Fibromodulin (FMOD) from Sus scrofa (Pig).